We begin with the raw amino-acid sequence, 172 residues long: MIIYKDTVTEDEMFSDIYKIAETPDGMCFEVEGKIIQRVEGAIDDALIGGNASAECQEEDIGGATTVSGVDIVINHKLQETGFTKDSYKNYIKDYVKLVKAKLEETDPDRVKPFMKGIQDRVKLILGNFKNYQFYTGERMNPDGMVALLDYREDGVTPFMIFFKDGLISEKC.

In terms of domain architecture, TCTP spans 1 to 172; sequence MIIYKDTVTE…FKDGLISEKC (172 aa).

It belongs to the TCTP family.

It is found in the cytoplasm. Functionally, involved in calcium binding and microtubule stabilization. The sequence is that of Translationally-controlled tumor protein homolog (tpt1) from Xenopus tropicalis (Western clawed frog).